The chain runs to 364 residues: Ribosomal RNA large subunit methyltransferase M (364 aa).

S-adenosyl-L-methionine contacts are provided by residues Ser187, Cys220–Gly223, Asp239, Asp259, and Asp276. Lys305 (proton acceptor) is an active-site residue.

The protein belongs to the class I-like SAM-binding methyltransferase superfamily. RNA methyltransferase RlmE family. RlmM subfamily. As to quaternary structure, monomer.

It is found in the cytoplasm. The enzyme catalyses cytidine(2498) in 23S rRNA + S-adenosyl-L-methionine = 2'-O-methylcytidine(2498) in 23S rRNA + S-adenosyl-L-homocysteine + H(+). Catalyzes the 2'-O-methylation at nucleotide C2498 in 23S rRNA. The polypeptide is Ribosomal RNA large subunit methyltransferase M (Aeromonas salmonicida (strain A449)).